Here is a 256-residue protein sequence, read N- to C-terminus: MKLYKADAIVLRARDCGEGDKILTLYSREHGRIKAMAHGVSKPTSRKRGAVQPFTRSRFLLRRGRELDTVSQCEGVETFPFLRESLERIGYASYVAELVEALTPEGEPNESLFFLLLDVLRLLAGGDAEMLARAFELKVAALLGYCPVLERCSHCQGALAGPLFFSSSLGGAVCGLCVAFAANPVEVNKGTLEILKALLNWPLARIGLLRVNRRFRNRIRLILRQYLTYHLERDLKSYAFLDRFGQAPAGSGAADV.

It belongs to the RecO family.

Its function is as follows. Involved in DNA repair and RecF pathway recombination. In Pelotomaculum thermopropionicum (strain DSM 13744 / JCM 10971 / SI), this protein is DNA repair protein RecO.